The chain runs to 320 residues: 2-oxoglutarate-dependent dioxygenase thnC (320 aa).

The Fe2OG dioxygenase domain maps to 174 to 278; it reads PLVQMKLIRY…HSCATFWHGD (105 aa). Fe cation contacts are provided by His-199, Asp-201, and His-258. Arg-268 contacts 2-oxoglutarate.

This sequence belongs to the iron/ascorbate-dependent oxidoreductase family. The cofactor is Fe(2+).

The catalysed reaction is trihazone A + 2-oxoglutarate + O2 + H(+) = trihazone D + succinate + 2 CO2 + H2O. The protein operates within secondary metabolite biosynthesis. Functionally, 2-oxoglutarate-dependent dioxygenase; part of the gene cluster that produces the tetronate natural products trihazones. ThnC catalyzes the oxidative decarboxylation of trihazone A to trihazone D. The C4 hydrogen is first abstracted by the iron-oxo species generated in ThnC to give a tertiary radical at C4. This is followed by decarboxylation and removal of the second electron by the FeIII-OH center to give trihazone D. The pathway begins with the formation of trihazone A by the hybrid PKS-NRPS synthetase thnA and the trans-enoyl reductase thnE. Trihazone A is further decarboxylated by the 2-oxoglutarate-dependent dioxygenase thnC to produce trihazone D. The function of the FAD-dependent monooxygenase thnD has still to be identified. This is 2-oxoglutarate-dependent dioxygenase thnC from Trichoderma harzianum (Hypocrea lixii).